We begin with the raw amino-acid sequence, 194 residues long: 3-isopropylmalate dehydratase small subunit (194 aa).

It belongs to the LeuD family. LeuD type 1 subfamily. As to quaternary structure, heterodimer of LeuC and LeuD.

It catalyses the reaction (2R,3S)-3-isopropylmalate = (2S)-2-isopropylmalate. It functions in the pathway amino-acid biosynthesis; L-leucine biosynthesis; L-leucine from 3-methyl-2-oxobutanoate: step 2/4. Its function is as follows. Catalyzes the isomerization between 2-isopropylmalate and 3-isopropylmalate, via the formation of 2-isopropylmaleate. This is 3-isopropylmalate dehydratase small subunit from Bacillus cereus (strain ATCC 14579 / DSM 31 / CCUG 7414 / JCM 2152 / NBRC 15305 / NCIMB 9373 / NCTC 2599 / NRRL B-3711).